We begin with the raw amino-acid sequence, 177 residues long: Endoribonuclease YbeY (177 aa).

Zn(2+)-binding residues include H118, H122, and H128.

The protein belongs to the endoribonuclease YbeY family. Zn(2+) is required as a cofactor.

It localises to the cytoplasm. Its function is as follows. Single strand-specific metallo-endoribonuclease involved in late-stage 70S ribosome quality control and in maturation of the 3' terminus of the 16S rRNA. This Mycobacterium bovis (strain ATCC BAA-935 / AF2122/97) protein is Endoribonuclease YbeY.